We begin with the raw amino-acid sequence, 382 residues long: Lipid-A-disaccharide synthase (382 aa).

This sequence belongs to the LpxB family.

It carries out the reaction 2-N,3-O-bis[(3R)-3-hydroxytetradecanoyl]-alpha-D-glucosaminyl 1-phosphate + UDP-2-N,3-O-bis[(3R)-3-hydroxytetradecanoyl]-alpha-D-glucosamine = lipid A disaccharide (E. coli) + UDP + H(+). It catalyses the reaction a lipid X + a UDP-2-N,3-O-bis[(3R)-3-hydroxyacyl]-alpha-D-glucosamine = a lipid A disaccharide + UDP + H(+). It participates in glycolipid biosynthesis; lipid IV(A) biosynthesis; lipid IV(A) from (3R)-3-hydroxytetradecanoyl-[acyl-carrier-protein] and UDP-N-acetyl-alpha-D-glucosamine: step 5/6. Condensation of UDP-2,3-diacylglucosamine and 2,3-diacylglucosamine-1-phosphate to form lipid A disaccharide, a precursor of lipid A, a phosphorylated glycolipid that anchors the lipopolysaccharide to the outer membrane of the cell. This Escherichia coli O8 (strain IAI1) protein is Lipid-A-disaccharide synthase.